We begin with the raw amino-acid sequence, 430 residues long: Phosphoribosylamine--glycine ligase (430 aa).

Residues 109-316 (KDFMARHGIP…LLDLIEAALN (208 aa)) enclose the ATP-grasp domain. 135-196 (VRQQGAPIVI…EEYLDGEEAS (62 aa)) contributes to the ATP binding site. The Mg(2+) site is built by Glu-286 and Asn-288.

The protein belongs to the GARS family. Mg(2+) serves as cofactor. Requires Mn(2+) as cofactor.

The enzyme catalyses 5-phospho-beta-D-ribosylamine + glycine + ATP = N(1)-(5-phospho-beta-D-ribosyl)glycinamide + ADP + phosphate + H(+). The protein operates within purine metabolism; IMP biosynthesis via de novo pathway; N(1)-(5-phospho-D-ribosyl)glycinamide from 5-phospho-alpha-D-ribose 1-diphosphate: step 2/2. The sequence is that of Phosphoribosylamine--glycine ligase from Xylella fastidiosa (strain Temecula1 / ATCC 700964).